Here is a 435-residue protein sequence, read N- to C-terminus: Chaperone SurA (435 aa).

The first 24 residues, 1–24, serve as a signal peptide directing secretion; the sequence is MRLRSFAFLGFMLLVAMAPSMASA. 2 consecutive PpiC domains span residues 173–274 and 286–385; these read DTAY…KLID and VTEN…ELED.

It is found in the periplasm. The enzyme catalyses [protein]-peptidylproline (omega=180) = [protein]-peptidylproline (omega=0). Its function is as follows. Chaperone involved in the correct folding and assembly of outer membrane proteins. Recognizes specific patterns of aromatic residues and the orientation of their side chains, which are found more frequently in integral outer membrane proteins. May act in both early periplasmic and late outer membrane-associated steps of protein maturation. This is Chaperone SurA from Chromohalobacter salexigens (strain ATCC BAA-138 / DSM 3043 / CIP 106854 / NCIMB 13768 / 1H11).